The sequence spans 109 residues: Fluoride-specific ion channel FluC 1 (109 aa).

4 helical membrane passes run 1-21, 29-49, 55-75, and 87-107; these read MVIV…YFFS, LPLG…VFYN, EVYA…STLN, and VFYS…FLGI. Na(+) is bound by residues G66 and T69.

Belongs to the fluoride channel Fluc/FEX (TC 1.A.43) family.

The protein resides in the cell membrane. It catalyses the reaction fluoride(in) = fluoride(out). Its activity is regulated as follows. Na(+) is not transported, but it plays an essential structural role and its presence is essential for fluoride channel function. Functionally, fluoride-specific ion channel. Important for reducing fluoride concentration in the cell, thus reducing its toxicity. This chain is Fluoride-specific ion channel FluC 1, found in Streptococcus pneumoniae (strain ATCC BAA-255 / R6).